Consider the following 2256-residue polypeptide: GON-4-like protein (2256 aa).

3 disordered regions span residues 1–56, 105–213, and 227–266; these read MLPC…DSAG, PSLE…SLGP, and LFIPTEEQDGEESDKRKKTKKGTKRKRDGRGQEQGTMTYD. Residues 23–35 show a composition bias toward basic and acidic residues; sequence EDLHLEAAVKPDT. Polar residues predominate over residues 40-53; it reads DCTSESLSWGQSHD. Residues 141 to 176 are compositionally biased toward basic and acidic residues; sequence TREDGGDHTVPEEPPSGEHAEEVKAEGGELEMHSEG. Residues 242 to 254 show a composition bias toward basic residues; sequence RKKTKKGTKRKRD. A Phosphoserine modification is found at Ser346. Acidic residues predominate over residues 366–395; that stretch reads EDDDSSDEEYQPDEEEEDETAEESLLESDV. 3 disordered regions span residues 366–428, 441–460, and 545–573; these read EDDD…VLSE, SAEVVPMGPPPPPKPKQTRD, and DVENEDEADDDDDPEYNFLEDLDEPDTED. A compositionally biased stretch (acidic residues) spans 545–571; the sequence is DVENEDEADDDDDPEYNFLEDLDEPDT. The segment at 609–1363 is required for interaction with YY1, SIN3A and HDAC1, and transcriptional repression activity; it reads EMGFSNMEDD…DCMEEISSDF (755 aa). Ser783 carries the post-translational modification Phosphoserine. Composition is skewed to low complexity over residues 947–959 and 1094–1115; these read TAGGSVTAATETS and PWSESQSAPPSSSAPKLMLPSL. 4 disordered regions span residues 947–969, 1078–1141, 1241–1288, and 1360–1620; these read TAGGSVTAATETSTDQHLQKTSP, AALP…SPCV, AEGK…EAVS, and SSDF…SRAR. A compositionally biased stretch (basic residues) spans 1119–1135; that stretch reads KFRKPYVRRKPTRRKGA. Positions 1364 to 1386 are enriched in basic and acidic residues; the sequence is PKQDIGEEVKEECCMELDRDSPQ. 2 stretches are compositionally biased toward polar residues: residues 1387 to 1401 and 1429 to 1444; these read EKASSVSEMSKQTAT and LPQSTLSSMDQGTVLN. Ser1445 is subject to Phosphoserine. Positions 1475-1495 are enriched in acidic residues; the sequence is GAEEEEEEDFDDLTQDEEDEL. Positions 1496 to 1510 are enriched in low complexity; sequence SSASEESVLSVPELQ. Acidic residues predominate over residues 1529–1553; sequence GESEEENSQEENSEPEEEEEEEAEG. Residues 1606–1620 are compositionally biased toward basic residues; the sequence is RSSHRARSRRGSRAR. 2 PAH domains span residues 1644 to 1716 and 1726 to 1797; these read EQKD…LLPE and EQQA…FDHL. Disordered regions lie at residues 1831-1886 and 1909-1966; these read VEEE…LKKS and LELV…APIP. A compositionally biased stretch (basic and acidic residues) spans 1851–1868; that stretch reads EIGVQHQDKESEWPEAAK. A phosphoserine mark is found at Ser1921 and Ser1994. 2 disordered regions span residues 2050-2078 and 2110-2148; these read PETSETERLPGTVELPAPLPSPVSLSTRD and IRGTSSGASASEAAPTASREGLAEDSETQGKGPEAVLPK. Residues 2111 to 2129 are compositionally biased toward low complexity; sequence RGTSSGASASEAAPTASRE. The 54-residue stretch at 2163–2216 folds into the Myb-like domain; that stretch reads STGEKVVLWTREADRVILTMCQEQGAQPHTFSVISQQLGNKTPVEVSHRFRELM. The tract at residues 2223–2256 is disordered; it reads CEASSEDEDDATSTSNADQLSDHGDLLSEEELDE.

In terms of assembly, found in a complex with YY1, SIN3A and HDAC1.

It is found in the nucleus. Has transcriptional repressor activity, probably as part of a complex with YY1, SIN3A and HDAC1. Required for B cell lymphopoiesis. The protein is GON-4-like protein (Gon4l) of Rattus norvegicus (Rat).